The chain runs to 276 residues: Foldase protein PrsA (276 aa).

An N-terminal signal peptide occupies residues 1–18; it reads MRKWMIVAAVAAVFGLSA. A lipid anchor (N-palmitoyl cysteine) is attached at cysteine 19. Cysteine 19 carries the S-diacylglycerol cysteine lipid modification. A PpiC domain is found at 133 to 223; that stretch reads KPKIRASHIL…YGYHIIKVTD (91 aa).

The protein belongs to the PrsA family.

It localises to the cell membrane. It carries out the reaction [protein]-peptidylproline (omega=180) = [protein]-peptidylproline (omega=0). Plays a major role in protein secretion by helping the post-translocational extracellular folding of several secreted proteins. This Geobacillus sp. (strain WCH70) protein is Foldase protein PrsA.